Consider the following 293-residue polypeptide: Elongation factor Ts (293 aa).

Positions 80-83 (TDFV) are involved in Mg(2+) ion dislocation from EF-Tu.

It belongs to the EF-Ts family.

The protein localises to the cytoplasm. Associates with the EF-Tu.GDP complex and induces the exchange of GDP to GTP. It remains bound to the aminoacyl-tRNA.EF-Tu.GTP complex up to the GTP hydrolysis stage on the ribosome. In Burkholderia vietnamiensis (strain G4 / LMG 22486) (Burkholderia cepacia (strain R1808)), this protein is Elongation factor Ts.